Consider the following 180-residue polypeptide: Small ribosomal subunit protein uS4 (180 aa).

The region spanning 103–165 (RRLQTLVYKK…KNSPFAKESH (63 aa)) is the S4 RNA-binding domain.

Belongs to the universal ribosomal protein uS4 family. Part of the 30S ribosomal subunit. Contacts protein S5. The interaction surface between S4 and S5 is involved in control of translational fidelity.

One of the primary rRNA binding proteins, it binds directly to 16S rRNA where it nucleates assembly of the body of the 30S subunit. Its function is as follows. With S5 and S12 plays an important role in translational accuracy. The chain is Small ribosomal subunit protein uS4 from Thermococcus gammatolerans (strain DSM 15229 / JCM 11827 / EJ3).